We begin with the raw amino-acid sequence, 448 residues long: UDP-N-acetylmuramoylalanine--D-glutamate ligase (448 aa).

An ATP-binding site is contributed by 112 to 118; sequence GSNAKST.

Belongs to the MurCDEF family.

It localises to the cytoplasm. The catalysed reaction is UDP-N-acetyl-alpha-D-muramoyl-L-alanine + D-glutamate + ATP = UDP-N-acetyl-alpha-D-muramoyl-L-alanyl-D-glutamate + ADP + phosphate + H(+). Its pathway is cell wall biogenesis; peptidoglycan biosynthesis. Its function is as follows. Cell wall formation. Catalyzes the addition of glutamate to the nucleotide precursor UDP-N-acetylmuramoyl-L-alanine (UMA). This Acinetobacter baumannii (strain ACICU) protein is UDP-N-acetylmuramoylalanine--D-glutamate ligase.